Consider the following 411-residue polypeptide: Carbohydrate sulfotransferase 1 (411 aa).

Residues 1-2 (MQ) lie on the Cytoplasmic side of the membrane. Residues 3 to 23 (CSWKAVLLLALASIAIQYTAI) traverse the membrane as a helical; Signal-anchor for type II membrane protein segment. Residues 24–411 (RTFTAKSFHT…VEERDFRPFS (388 aa)) are Lumenal-facing. N-linked (GlcNAc...) asparagine glycosylation is present at asparagine 56. 69-75 (TRSGSSF) lines the 3'-phosphoadenylyl sulfate pocket. N-linked (GlcNAc...) asparagine glycosylation is found at asparagine 145 and asparagine 189. 234 to 242 (RDPRGILAS) serves as a coordination point for 3'-phosphoadenylyl sulfate. Asparagine 334 carries an N-linked (GlcNAc...) asparagine glycan. The Cell attachment site signature appears at 337–339 (RGD).

It belongs to the sulfotransferase 1 family. Gal/GlcNAc/GalNAc subfamily. Widely expressed at low level. Expressed in brain and skeletal muscle. Expressed by high endothelial cells (HEVs) and leukocytes.

It localises to the golgi apparatus membrane. It catalyses the reaction 3'-phosphoadenylyl sulfate + keratan = adenosine 3',5'-bisphosphate + keratan 6'-sulfate.. Its pathway is glycan metabolism. In terms of biological role, sulfotransferase that utilizes 3'-phospho-5'-adenylyl sulfate (PAPS) as sulfonate donor to catalyze the transfer of sulfate to position 6 of internal galactose (Gal) residues of keratan. Cooperates with B4GALT4 and B3GNT7 glycosyltransferases and CHST6 sulfotransferase to construct and elongate disulfated disaccharide unit [-&gt;3(6-sulfoGalbeta)1-&gt;4(6-sulfoGlcNAcbeta)1-&gt;] within keratan sulfate polymer. Has a preference for sulfating keratan sulfate, but it also transfers sulfate to the unsulfated polymer. Involved in biosynthesis of phosphacan, a major keratan sulfate proteoglycan in the developing brain. Involved in biosynthesis of 6-sulfoGalbeta-containing O-linked glycans in high endothelial venules of lymph nodes. May act in a synergistic manner with CHST4 to generate sialyl 6',6-disulfo Lewis X motif, a recognition determinant for immune cell receptors implicated in leukocyte trafficking. Catalyzes sulfation of N-acetyllactosamine (LacNAc) oligosaccharides with highest efficiency for sialylated LacNAc structures. This Homo sapiens (Human) protein is Carbohydrate sulfotransferase 1.